A 238-amino-acid chain; its full sequence is Dephospho-CoA kinase (238 aa).

A DPCK domain is found at 3–233; it reads IIGLTGGVGT…QRPFASPPRA (231 aa). Residue 11 to 16 participates in ATP binding; the sequence is GTGKST. Disordered stretches follow at residues 110–129 and 219–238; these read HGVPLEEEPASQKRSGVGFS and LASAGQRPFASPPRAGYSDG.

Belongs to the CoaE family.

It is found in the cytoplasm. The enzyme catalyses 3'-dephospho-CoA + ATP = ADP + CoA + H(+). It participates in cofactor biosynthesis; coenzyme A biosynthesis; CoA from (R)-pantothenate: step 5/5. Its function is as follows. Catalyzes the phosphorylation of the 3'-hydroxyl group of dephosphocoenzyme A to form coenzyme A. The sequence is that of Dephospho-CoA kinase from Synechococcus sp. (strain JA-2-3B'a(2-13)) (Cyanobacteria bacterium Yellowstone B-Prime).